We begin with the raw amino-acid sequence, 768 residues long: Probable beta-glucosidase M (768 aa).

The first 19 residues, 1–19 (MHAIAGLTGFLAGVSLSYA), serve as a signal peptide directing secretion. 3 N-linked (GlcNAc...) asparagine glycosylation sites follow: Asn25, Asn72, and Asn259. Asp287 is a catalytic residue. N-linked (GlcNAc...) asparagine glycosylation is found at Asn315, Asn322, Asn394, Asn434, Asn472, Asn543, and Asn651.

The protein belongs to the glycosyl hydrolase 3 family.

The protein resides in the secreted. The enzyme catalyses Hydrolysis of terminal, non-reducing beta-D-glucosyl residues with release of beta-D-glucose.. It participates in glycan metabolism; cellulose degradation. Beta-glucosidases are one of a number of cellulolytic enzymes involved in the degradation of cellulosic biomass. Catalyzes the last step releasing glucose from the inhibitory cellobiose. The polypeptide is Probable beta-glucosidase M (bglM) (Aspergillus flavus (strain ATCC 200026 / FGSC A1120 / IAM 13836 / NRRL 3357 / JCM 12722 / SRRC 167)).